The following is a 184-amino-acid chain: Protein GrpE (184 aa).

The span at 1 to 10 (MTDTPPENEE) shows a compositional bias: acidic residues. A disordered region spans residues 1-22 (MTDTPPENEEQHESNVQNENEV).

Belongs to the GrpE family. Homodimer.

The protein resides in the cytoplasm. Participates actively in the response to hyperosmotic and heat shock by preventing the aggregation of stress-denatured proteins, in association with DnaK and GrpE. It is the nucleotide exchange factor for DnaK and may function as a thermosensor. Unfolded proteins bind initially to DnaJ; upon interaction with the DnaJ-bound protein, DnaK hydrolyzes its bound ATP, resulting in the formation of a stable complex. GrpE releases ADP from DnaK; ATP binding to DnaK triggers the release of the substrate protein, thus completing the reaction cycle. Several rounds of ATP-dependent interactions between DnaJ, DnaK and GrpE are required for fully efficient folding. The chain is Protein GrpE from Chlamydia pneumoniae (Chlamydophila pneumoniae).